Here is a 520-residue protein sequence, read N- to C-terminus: GMP synthase [glutamine-hydrolyzing] (520 aa).

Residues K9 to H202 form the Glutamine amidotransferase type-1 domain. C86 acts as the Nucleophile in catalysis. Residues H176 and E178 contribute to the active site. The 193-residue stretch at W203–R395 folds into the GMPS ATP-PPase domain. Position 230–236 (S230–S236) interacts with ATP.

In terms of assembly, homodimer.

The enzyme catalyses XMP + L-glutamine + ATP + H2O = GMP + L-glutamate + AMP + diphosphate + 2 H(+). Its pathway is purine metabolism; GMP biosynthesis; GMP from XMP (L-Gln route): step 1/1. Catalyzes the synthesis of GMP from XMP. This is GMP synthase [glutamine-hydrolyzing] from Pelobacter propionicus (strain DSM 2379 / NBRC 103807 / OttBd1).